A 402-amino-acid polypeptide reads, in one-letter code: MKKLLKSALLFAATGSALSLQALPVGNPAEPSLLIDGTMWEGASGDPCDPCATWCDAISIRAGYYGDYVFDRVLKVDVNKTFSGMAATPTQATGNASNTNQPEANGRPNIAYGRHMQDAEWFSNAAFLALNIWDRFDIFCTLGASNGYFKSSSAAFNLVGLIGFSATSSTSTELPMQLPNVGITQGVVEFYTDTSFSWSVGARGALWECGCATLGAEFQYAQSNPKIEVLNVTSSPAQFVIHKPRGYKGASSNFPLPITAGTTEATDTKSATIKYHEWQVGLALSYRLNMLVPYIGVNWSRATFDADTIRIAQPKLKSEILNITTWNPSLLGSTTTLPNNGGKDVLSDVLQIASIQINKMKSRKACGVAVGATLIDADKWSITGEARLINERAAHMNAQFRF.

A signal peptide spans 1 to 22 (MKKLLKSALLFAATGSALSLQA).

The protein belongs to the chlamydial porin (CP) (TC 1.B.2) family. In terms of assembly, part of a disulfide cross-linked outer membrane complex (COMC) composed of the major outer membrane porin, the small cysteine-rich protein (OmcA) and the large cysteine-rich periplasmic protein (OmcB).

The protein resides in the cell outer membrane. Its function is as follows. In elementary bodies (EBs, the infectious stage, which is able to survive outside the host cell) provides the structural integrity of the outer envelope through disulfide cross-links with the small cysteine-rich protein and the large cysteine-rich periplasmic protein. It has been described in publications as the Sarkosyl-insoluble COMC (Chlamydia outer membrane complex), and serves as the functional equivalent of peptidoglycan. Functionally, permits diffusion of specific solutes through the outer membrane. The polypeptide is Major outer membrane porin (ompA) (Chlamydia psittaci (Chlamydophila psittaci)).